The sequence spans 126 residues: MEQQLTFYSYPSCTSCRKTKHWLKAHQIEFNERHLFRETPTREELKYILSLTTEGIDEILATRSQTFKNLNLNIEEMTVNEVLELLIEKPKLLRRPILVDNKKLVIGYNPGELLKLSKKKTVHQSA.

Residues Cys-13 and Cys-16 are joined by a disulfide bond.

It belongs to the ArsC family.

The protein resides in the cytoplasm. Activity is controlled at multiple levels. Regulation includes a positive autoregulatory loop on mgsR transcription and a post-translational redox-sensitive activation step by an intramolecular disulfide bond formation in response to ethanol stress. In addition, protein stability is strictly controlled by rapid proteolytic degradation by the ClpXP and ClpCP proteases. The McsB protein-arginine kinase might serve as a proteolytic adapter for the ClpX ATPase in the degradation mechanism of MgsR. In terms of biological role, regulates transcription of a subregulon within the general stress response. Exerts positive and negative effects in response to ethanol stress. This Bacillus subtilis (strain 168) protein is Regulatory protein MgsR.